Consider the following 794-residue polypeptide: Phosphoribosylformylglycinamidine synthase subunit PurL (794 aa).

Residue His47 is part of the active site. Positions 50 and 89 each coordinate ATP. Glu91 contacts Mg(2+). Substrate-binding positions include 92 to 95 and Arg114; that span reads SHNH. His93 (proton acceptor) is an active-site residue. Asp115 provides a ligand contact to Mg(2+). Gln238 contacts substrate. Asp266 provides a ligand contact to Mg(2+). 310–312 serves as a coordination point for substrate; the sequence is ESQ. The ATP site is built by Asp522 and Gly559. Mg(2+) is bound at residue Asn560. Ser562 contributes to the substrate binding site.

The protein belongs to the FGAMS family. In terms of assembly, monomer. Part of the FGAM synthase complex composed of 1 PurL, 1 PurQ and 2 PurS subunits.

It localises to the cytoplasm. It carries out the reaction N(2)-formyl-N(1)-(5-phospho-beta-D-ribosyl)glycinamide + L-glutamine + ATP + H2O = 2-formamido-N(1)-(5-O-phospho-beta-D-ribosyl)acetamidine + L-glutamate + ADP + phosphate + H(+). It participates in purine metabolism; IMP biosynthesis via de novo pathway; 5-amino-1-(5-phospho-D-ribosyl)imidazole from N(2)-formyl-N(1)-(5-phospho-D-ribosyl)glycinamide: step 1/2. Part of the phosphoribosylformylglycinamidine synthase complex involved in the purines biosynthetic pathway. Catalyzes the ATP-dependent conversion of formylglycinamide ribonucleotide (FGAR) and glutamine to yield formylglycinamidine ribonucleotide (FGAM) and glutamate. The FGAM synthase complex is composed of three subunits. PurQ produces an ammonia molecule by converting glutamine to glutamate. PurL transfers the ammonia molecule to FGAR to form FGAM in an ATP-dependent manner. PurS interacts with PurQ and PurL and is thought to assist in the transfer of the ammonia molecule from PurQ to PurL. This chain is Phosphoribosylformylglycinamidine synthase subunit PurL, found in Prochlorococcus marinus (strain MIT 9313).